Here is a 309-residue protein sequence, read N- to C-terminus: WD repeat domain phosphoinositide-interacting protein 4 (309 aa).

One copy of the WD 1 repeat lies at 4-42 (QPLRGVTSLHFNQDQSCFCCAMETGVRIYNVEPLMEKGH). The L/FRRG motif motif lies at 180–183 (LRRG). One copy of the WD 2 repeat lies at 184–223 (TDPATLYCINFSHDSSFLCASSDKGTVHIFALKDTRLNRR).

This sequence belongs to the WD repeat PROPPIN family. In terms of assembly, interacts with WIPI1. Interacts with WIPI2. Interacts with ATG2A and ATG2B. Interacts with ULK1. May interact with the PRKAA1, PRKAA2, PRKAB1 and PRKAG1 subunits of the AMPK kinase. May interact with NUDC.

The protein resides in the preautophagosomal structure. The protein localises to the cytoplasm. Functionally, component of the autophagy machinery that controls the major intracellular degradation process by which cytoplasmic materials are packaged into autophagosomes and delivered to lysosomes for degradation. Binds phosphatidylinositol 3-phosphate (PtdIns3P). Activated by the STK11/AMPK signaling pathway upon starvation, WDR45 is involved in autophagosome assembly downstream of WIPI2, regulating the size of forming autophagosomes. Together with WIPI1, promotes ATG2 (ATG2A or ATG2B)-mediated lipid transfer by enhancing ATG2-association with phosphatidylinositol 3-monophosphate (PI3P)-containing membranes. Probably recruited to membranes through its PtdIns3P activity. The sequence is that of WD repeat domain phosphoinositide-interacting protein 4 (Wdr45) from Rattus norvegicus (Rat).